The following is a 1306-amino-acid chain: Angiotensin-converting enzyme (1306 aa).

A signal peptide spans 1–28 (MGAASGRRSPPLLLPLLLLLLPPPPVIL). At 29–1256 (ELDPALQPGN…GLNLEEQQAR (1228 aa)) the chain is on the extracellular side. Peptidase M2 domains lie at 40 to 624 (PADE…LGWP) and 643 to 1222 (VSDE…LGWP). N-linked (GlcNAc...) asparagine glycosylation is found at Asn-54, Asn-74, Asn-111, Asn-146, and Asn-160. Residues Cys-157 and Cys-165 are joined by a disulfide bond. Tyr-231 lines the chloride pocket. Residue Asn-318 is glycosylated (N-linked (GlcNAc...) asparagine). Cys-359 and Cys-377 are oxidised to a cystine. His-390 serves as a coordination point for Zn(2+). The active-site Proton acceptor 1 is the Glu-391. The Zn(2+) site is built by His-394 and Glu-418. N-linked (GlcNAc...) asparagine glycans are attached at residues Asn-445 and Asn-509. His-520 acts as the Proton donor 1 in catalysis. N-linked (GlcNAc...) asparagine glycosylation is present at Asn-523. Residue Arg-529 coordinates chloride. A disulfide bond links Cys-545 and Cys-557. Asn-673, Asn-695, Asn-714, and Asn-760 each carry an N-linked (GlcNAc...) asparagine glycan. A disulfide bridge links Cys-757 with Cys-763. 2 residues coordinate chloride: Arg-791 and Tyr-829. N-linked (GlcNAc...) asparagine glycosylation occurs at Asn-942. Cys-957 and Cys-975 are oxidised to a cystine. His-988 is a binding site for Zn(2+). Glu-989 serves as the catalytic Proton acceptor 2. Residues His-992 and Glu-1016 each coordinate Zn(2+). 2 residues coordinate chloride: Trp-1090 and Arg-1094. Residue His-1118 is the Proton donor 2 of the active site. Arg-1127 provides a ligand contact to chloride. Cys-1143 and Cys-1155 form a disulfide bridge. 2 N-linked (GlcNAc...) asparagine glycosylation sites follow: Asn-1191 and Asn-1225. A juxtamembrane stalk region spans residues 1215–1256 (HGEKLGWPQYNWTPNSARLEGPFVGSGRVNFLGLNLEEQQAR). Residues 1257–1277 (VGQWVLLFLGVALLVATLGLT) traverse the membrane as a helical segment. Over 1278–1306 (QRLFSIRHHSLRRPHRGPQFGSEVELRHS) the chain is Cytoplasmic. Ser-1299 is subject to Phosphoserine.

This sequence belongs to the peptidase M2 family. In terms of assembly, monomer and homodimer; homodimerizes following binding to an inhibitor. Interacts with calmodulin (CALM1, CALM2 or CALM3); interaction takes place in the cytoplasmic region and regulates phosphorylation and proteolytic cleavage. Zn(2+) is required as a cofactor. The cofactor is chloride. In terms of processing, produced following proteolytic cleavage by secretase enzymes that cleave the transmembrane form in the juxtamembrane stalk region upstream of the transmembrane region. Cleavage can take place at different sites of the juxtamembrane stalk region. Post-translationally, phosphorylated by CK2 on Ser-1299; which allows membrane retention. Phosphorylated on tyrosine residues on its extracellular part, promoting cleavage by secretase enzymes and formation of the soluble form (Angiotensin-converting enzyme, soluble form).

The protein resides in the cell membrane. It is found in the cytoplasm. The protein localises to the secreted. It catalyses the reaction Release of a C-terminal dipeptide, oligopeptide-|-Xaa-Yaa, when Xaa is not Pro, and Yaa is neither Asp nor Glu. Thus, conversion of angiotensin I to angiotensin II, with increase in vasoconstrictor activity, but no action on angiotensin II.. It carries out the reaction angiotensin I + H2O = L-histidyl-L-leucine + angiotensin II. The catalysed reaction is bradykinin + H2O = L-Phe-L-Arg + bradykinin(1-7). The enzyme catalyses substance P + H2O = substance P(1-9) + L-Leu-L-Met-NH2. It catalyses the reaction substance P + H2O = substance P(1-8) + Gly-L-Leu-L-Met-NH2. It carries out the reaction substance P + H2O = L-Phe-L-Phe-Gly-L-Leu-L-Met-NH2 + substance P(1-6). The catalysed reaction is neurotensin + H2O = neurotensin(1-11) + L-isoleucyl-L-leucine. The enzyme catalyses goralatide + H2O = N-acetyl-L-seryl-L-aspartate + L-lysyl-L-proline. It catalyses the reaction Met-enkephalin + H2O = L-phenylalanyl-L-methionine + L-tyrosylglycylglycine. It carries out the reaction Leu-enkephalin + H2O = L-tyrosylglycylglycine + L-phenylalanyl-L-leucine. The catalysed reaction is Met-enkephalin-Arg-Phe + H2O = L-arginyl-L-phenylalanine + Met-enkephalin. Its activity is regulated as follows. The dipeptidyl carboxypeptidase activity is strongly activated by chloride. The dipeptidyl carboxypeptidase activity is specifically inhibited by lisinopril, captopril and enalaprilat. In terms of biological role, dipeptidyl carboxypeptidase that removes dipeptides from the C-terminus of a variety of circulating hormones, such as angiotensin I, bradykinin or enkephalins, thereby playing a key role in the regulation of blood pressure, electrolyte homeostasis or synaptic plasticity. Composed of two similar catalytic domains, each possessing a functional active site, with different selectivity for substrates. Plays a major role in the angiotensin-renin system that regulates blood pressure and sodium retention by the kidney by converting angiotensin I to angiotensin II, resulting in an increase of the vasoconstrictor activity of angiotensin. Also able to inactivate bradykinin, a potent vasodilator, and therefore enhance the blood pressure response. Acts as a regulator of synaptic transmission by mediating cleavage of neuropeptide hormones, such as substance P, neurotensin or enkephalins. Catalyzes degradation of different enkephalin neuropeptides (Met-enkephalin, Leu-enkephalin, Met-enkephalin-Arg-Phe and possibly Met-enkephalin-Arg-Gly-Leu). Acts as a regulator of synaptic plasticity in the nucleus accumbens of the brain by mediating cleavage of Met-enkephalin-Arg-Phe, a strong ligand of Mu-type opioid receptor OPRM1, into Met-enkephalin. Met-enkephalin-Arg-Phe cleavage by ACE decreases activation of OPRM1, leading to long-term synaptic potentiation of glutamate release. Also acts as a regulator of hematopoietic stem cell differentiation by mediating degradation of hemoregulatory peptide N-acetyl-SDKP (AcSDKP). Acts as a regulator of cannabinoid signaling pathway by mediating degradation of hemopressin, an antagonist peptide of the cannabinoid receptor CNR1. Involved in amyloid-beta metabolism by catalyzing degradation of Amyloid-beta protein 40 and Amyloid-beta protein 42 peptides, thereby preventing plaque formation. Catalyzes cleavage of cholecystokinin (maturation of Cholecystokinin-8 and Cholecystokinin-5) and Gonadoliberin-1 (both maturation and degradation) hormones. Degradation of hemoregulatory peptide N-acetyl-SDKP (AcSDKP) and amyloid-beta proteins is mediated by the N-terminal catalytic domain, while angiotensin I and cholecystokinin cleavage is mediated by the C-terminal catalytic region. Its function is as follows. Soluble form that is released in blood plasma and other body fluids following proteolytic cleavage in the juxtamembrane stalk region. The chain is Angiotensin-converting enzyme from Bos taurus (Bovine).